Consider the following 818-residue polypeptide: Phenylalanine--tRNA ligase beta subunit (818 aa).

A tRNA-binding domain is found at 39-148 (AAELQKFEVA…EDAVVGENFT (110 aa)). The B5 domain occupies 423 to 498 (PQKKPLDFSA…RIYGYDKIES (76 aa)). Positions 476, 482, 485, and 486 each coordinate Mg(2+). Residues 724 to 817 (SDFQANFRDY…IEQKFQGTLR (94 aa)) enclose the FDX-ACB domain.

Belongs to the phenylalanyl-tRNA synthetase beta subunit family. Type 1 subfamily. Tetramer of two alpha and two beta subunits. Mg(2+) is required as a cofactor.

The protein localises to the cytoplasm. The catalysed reaction is tRNA(Phe) + L-phenylalanine + ATP = L-phenylalanyl-tRNA(Phe) + AMP + diphosphate + H(+). In Rickettsia felis (strain ATCC VR-1525 / URRWXCal2) (Rickettsia azadi), this protein is Phenylalanine--tRNA ligase beta subunit.